The primary structure comprises 337 residues: DNA-directed RNA polymerase subunit alpha (337 aa).

Residues 1–233 (MIQKNWQELI…DQLSIFVNFE (233 aa)) form an alpha N-terminal domain (alpha-NTD) region. An alpha C-terminal domain (alpha-CTD) region spans residues 249–337 (FNPALLKKVD…DLAKRYEDQY (89 aa)).

It belongs to the RNA polymerase alpha chain family. As to quaternary structure, homodimer. The RNAP catalytic core consists of 2 alpha, 1 beta, 1 beta' and 1 omega subunit. When a sigma factor is associated with the core the holoenzyme is formed, which can initiate transcription.

The catalysed reaction is RNA(n) + a ribonucleoside 5'-triphosphate = RNA(n+1) + diphosphate. DNA-dependent RNA polymerase catalyzes the transcription of DNA into RNA using the four ribonucleoside triphosphates as substrates. In Brucella melitensis biotype 2 (strain ATCC 23457), this protein is DNA-directed RNA polymerase subunit alpha.